Consider the following 684-residue polypeptide: Probable phosphoenolpyruvate synthase (684 aa).

The Tele-phosphohistidine intermediate role is filled by His424. Residues Arg517, Arg564, and Glu661 each contribute to the substrate site. Mg(2+) is bound at residue Glu661.

It belongs to the PEP-utilizing enzyme family. Requires Mg(2+) as cofactor.

The enzyme catalyses pyruvate + ATP + H2O = phosphoenolpyruvate + AMP + phosphate + 2 H(+). It participates in carbohydrate biosynthesis; gluconeogenesis. Catalyzes the phosphorylation of pyruvate to phosphoenolpyruvate. This is Probable phosphoenolpyruvate synthase (ppsA) from Methanothermobacter thermautotrophicus (strain ATCC 29096 / DSM 1053 / JCM 10044 / NBRC 100330 / Delta H) (Methanobacterium thermoautotrophicum).